The sequence spans 1278 residues: Alpha-glucan water dikinase 2 (1278 aa).

Residues 1–23 (MATSKSQQFQLIEGMELQITVTG) form the signal peptide. The active-site Tele-phosphohistidine intermediate is the H886.

Belongs to the PEP-utilizing enzyme family. Homodimer. It depends on Mg(2+) as a cofactor.

The catalysed reaction is [(1-&gt;4)-alpha-D-glucosyl](n) + n ATP + n H2O = [(1-&gt;4)-6-phospho-alpha-D-glucosyl](n) + n AMP + n phosphate + 2n H(+). In terms of biological role, mediates the incorporation of phosphate into alpha-glucan, mostly at the C-6 position of glucose units. In Arabidopsis thaliana (Mouse-ear cress), this protein is Alpha-glucan water dikinase 2 (GWD2).